Here is a 229-residue protein sequence, read N- to C-terminus: Large ribosomal subunit protein uL1 (229 aa).

This sequence belongs to the universal ribosomal protein uL1 family. Part of the 50S ribosomal subunit.

Its function is as follows. Binds directly to 23S rRNA. The L1 stalk is quite mobile in the ribosome, and is involved in E site tRNA release. Protein L1 is also a translational repressor protein, it controls the translation of the L11 operon by binding to its mRNA. This is Large ribosomal subunit protein uL1 from Thermus thermophilus (strain ATCC BAA-163 / DSM 7039 / HB27).